Consider the following 254-residue polypeptide: Type III pantothenate kinase (254 aa).

An ATP-binding site is contributed by 6-13 (DVGNSNIV). Residues Tyr-100 and 107-110 (GADR) each bind substrate. The active-site Proton acceptor is the Asp-109. K(+) is bound at residue Asp-129. Thr-132 serves as a coordination point for ATP. Position 184 (Thr-184) interacts with substrate.

Belongs to the type III pantothenate kinase family. Homodimer. The cofactor is NH4(+). Requires K(+) as cofactor.

Its subcellular location is the cytoplasm. It carries out the reaction (R)-pantothenate + ATP = (R)-4'-phosphopantothenate + ADP + H(+). Its pathway is cofactor biosynthesis; coenzyme A biosynthesis; CoA from (R)-pantothenate: step 1/5. Its function is as follows. Catalyzes the phosphorylation of pantothenate (Pan), the first step in CoA biosynthesis. The polypeptide is Type III pantothenate kinase (Citrifermentans bemidjiense (strain ATCC BAA-1014 / DSM 16622 / JCM 12645 / Bem) (Geobacter bemidjiensis)).